A 398-amino-acid polypeptide reads, in one-letter code: MQKRLTLLGSTGSIGDSTLDVVARHPERFSVYALTAHRNGDKLVEQCLRFAPEVAVVGDAATAAHVEARLRAAGSRTTVLYGPQALVDVSKSDGCDTVVAAIVGAAGLAPSLAAARAGKRILLANKESLVMSGAIFMDAVRDHGAILLPVDSEHNAIFQCMPRDAAEHGGIAKIILTASGGPFRTREPATLVDVTPDEACKHPNWVMGRKISVDSATMMNKGLEVIEAHWIFGLPGDRIDVLIHPQSVIHSLVSYRDGSVLAQLGNPDMRTPIAHALAFPERVDAGVEQLDLAQIAQLSFEKPDYARFPCLALALKALAEGGIASAALNAANEVAVEAFLERRIGFMAIAATVEAVLDALPNRAPDGLDDVLAADAEARRLAAEIIAKAPARRVERTV.

NADPH is bound by residues threonine 11, glycine 12, serine 13, isoleucine 14, arginine 38, asparagine 39, and asparagine 125. Lysine 126 is a 1-deoxy-D-xylulose 5-phosphate binding site. Glutamate 127 lines the NADPH pocket. Residue aspartate 151 participates in Mn(2+) binding. The 1-deoxy-D-xylulose 5-phosphate site is built by serine 152, glutamate 153, serine 179, and histidine 202. Glutamate 153 lines the Mn(2+) pocket. Glycine 208 serves as a coordination point for NADPH. 1-deoxy-D-xylulose 5-phosphate-binding residues include serine 215, asparagine 220, lysine 221, and glutamate 224. Glutamate 224 serves as a coordination point for Mn(2+).

This sequence belongs to the DXR family. Mg(2+) serves as cofactor. It depends on Mn(2+) as a cofactor.

The catalysed reaction is 2-C-methyl-D-erythritol 4-phosphate + NADP(+) = 1-deoxy-D-xylulose 5-phosphate + NADPH + H(+). It participates in isoprenoid biosynthesis; isopentenyl diphosphate biosynthesis via DXP pathway; isopentenyl diphosphate from 1-deoxy-D-xylulose 5-phosphate: step 1/6. In terms of biological role, catalyzes the NADPH-dependent rearrangement and reduction of 1-deoxy-D-xylulose-5-phosphate (DXP) to 2-C-methyl-D-erythritol 4-phosphate (MEP). The protein is 1-deoxy-D-xylulose 5-phosphate reductoisomerase of Burkholderia multivorans (strain ATCC 17616 / 249).